The sequence spans 400 residues: Enoyl-[acyl-carrier-protein] reductase [NADH] 2 (400 aa).

Residues 48–53, 75–76, 112–113, and 141–142 each bind NAD(+); these read GASSGF, FE, DA, and LA. Position 228 (Tyr228) interacts with substrate. Tyr238 (proton donor) is an active-site residue. NAD(+)-binding positions include Lys247 and 276-278; that span reads LVT.

The protein belongs to the TER reductase family. Monomer.

It carries out the reaction a 2,3-saturated acyl-[ACP] + NAD(+) = a (2E)-enoyl-[ACP] + NADH + H(+). It participates in lipid metabolism; fatty acid biosynthesis. Functionally, involved in the final reduction of the elongation cycle of fatty acid synthesis (FAS II). Catalyzes the reduction of a carbon-carbon double bond in an enoyl moiety that is covalently linked to an acyl carrier protein (ACP). This Vibrio vulnificus (strain YJ016) protein is Enoyl-[acyl-carrier-protein] reductase [NADH] 2.